The chain runs to 71 residues: DNA-directed RNA polymerase subunit omega (71 aa).

Belongs to the RNA polymerase subunit omega family. The RNAP catalytic core consists of 2 alpha, 1 beta, 1 beta' and 1 omega subunit. When a sigma factor is associated with the core the holoenzyme is formed, which can initiate transcription.

It carries out the reaction RNA(n) + a ribonucleoside 5'-triphosphate = RNA(n+1) + diphosphate. Promotes RNA polymerase assembly. Latches the N- and C-terminal regions of the beta' subunit thereby facilitating its interaction with the beta and alpha subunits. This is DNA-directed RNA polymerase subunit omega from Campylobacter curvus (strain 525.92).